The chain runs to 286 residues: Shikimate dehydrogenase (NADP(+)) (286 aa).

Shikimate-binding positions include 22 to 24 and Thr-71; that span reads SRS. The active-site Proton acceptor is Lys-75. Glu-87 provides a ligand contact to NADP(+). Residues Asn-96 and Asp-111 each contribute to the shikimate site. Residues 136 to 140, 160 to 165, and Ile-225 contribute to the NADP(+) site; these read GAGGA and NRTPER. Residue Tyr-227 participates in shikimate binding. Gly-248 contacts NADP(+).

It belongs to the shikimate dehydrogenase family. As to quaternary structure, homodimer.

The catalysed reaction is shikimate + NADP(+) = 3-dehydroshikimate + NADPH + H(+). It functions in the pathway metabolic intermediate biosynthesis; chorismate biosynthesis; chorismate from D-erythrose 4-phosphate and phosphoenolpyruvate: step 4/7. Involved in the biosynthesis of the chorismate, which leads to the biosynthesis of aromatic amino acids. Catalyzes the reversible NADPH linked reduction of 3-dehydroshikimate (DHSA) to yield shikimate (SA). The polypeptide is Shikimate dehydrogenase (NADP(+)) (Rhizobium meliloti (strain 1021) (Ensifer meliloti)).